The sequence spans 362 residues: 3-dehydroquinate synthase (362 aa).

NAD(+)-binding positions include 70-75 (DGEKYK), 104-108 (GVIGD), 128-129 (TT), K141, and K150. Zn(2+) contacts are provided by E183, H246, and H263.

The protein belongs to the sugar phosphate cyclases superfamily. Dehydroquinate synthase family. The cofactor is Co(2+). It depends on Zn(2+) as a cofactor. Requires NAD(+) as cofactor.

It is found in the cytoplasm. The enzyme catalyses 7-phospho-2-dehydro-3-deoxy-D-arabino-heptonate = 3-dehydroquinate + phosphate. Its pathway is metabolic intermediate biosynthesis; chorismate biosynthesis; chorismate from D-erythrose 4-phosphate and phosphoenolpyruvate: step 2/7. Its function is as follows. Catalyzes the conversion of 3-deoxy-D-arabino-heptulosonate 7-phosphate (DAHP) to dehydroquinate (DHQ). The polypeptide is 3-dehydroquinate synthase (Acinetobacter baylyi (strain ATCC 33305 / BD413 / ADP1)).